Consider the following 181-residue polypeptide: Inner membrane-spanning protein YciB (181 aa).

Transmembrane regions (helical) follow at residues 10 to 30, 50 to 70, 80 to 100, 120 to 140, and 148 to 168; these read LIIFFALYKFYDIYVATGALI, MQLITFVMVALFGGMTLALHD, IVYVVFALGLTISQIMGKPAI, WAWVMFFSGCAALNLYVAYHL, and FKVFGLLAATFVFTLLTGGYI.

The protein belongs to the YciB family.

It localises to the cell inner membrane. Its function is as follows. Plays a role in cell envelope biogenesis, maintenance of cell envelope integrity and membrane homeostasis. The sequence is that of Inner membrane-spanning protein YciB from Vibrio cholerae serotype O1 (strain ATCC 39541 / Classical Ogawa 395 / O395).